Here is a 195-residue protein sequence, read N- to C-terminus: CD70 antigen (195 aa).

At 1-23 (MPEEGRPCPWVRWSGTAFQRQWP) the chain is on the cytoplasmic side. A helical; Signal-anchor for type II membrane protein transmembrane segment spans residues 24-44 (WLLLVVFITVFCCWFHCSGLL). The Extracellular segment spans residues 45–195 (SKQQQRLLEH…TFFGVQWICP (151 aa)). The region spanning 58–193 (HTAELQLNLT…DETFFGVQWI (136 aa)) is the THD domain. N-linked (GlcNAc...) asparagine glycans are attached at residues Asn65 and Asn116. Intrachain disulfides connect Cys117-Cys153 and Cys135-Cys170. Residue Asn172 is glycosylated (N-linked (GlcNAc...) asparagine).

The protein belongs to the tumor necrosis factor family. As to quaternary structure, homotrimer. N-glycosylated. Very low level of expression. Detected in splenocytes and thymocytes.

The protein localises to the cell membrane. Functionally, expressed at the plasma membrane of B cells, it is the ligand of the CD27 receptor which is specifically expressed at the surface of T cells. The CD70-CD27 signaling pathway mediates antigen-specific T cell activation and expansion which in turn provides immune surveillance of B cells. This Mus musculus (Mouse) protein is CD70 antigen.